We begin with the raw amino-acid sequence, 122 residues long: Guanine nucleotide exchange factor MSS4 homolog (122 aa).

The 112-residue stretch at 9–120 folds into the MSS4 domain; it reads EQITDGKNKS…YLALKRVVHK (112 aa). The Zn(2+) site is built by Cys-22, Cys-25, Cys-92, and Cys-95.

It belongs to the DSS4/MSS4 family. Interacts with Rab8.

It localises to the basal cell membrane. Its function is as follows. Guanine-nucleotide-releasing protein that acts on members of the sec4/ypt1/rab subfamily such as Rab8. During egg development, essential for establishing and maintaining epithelial cell polarity by regulating the correct polarized deposition of basal membrane (BM) proteins such as trol/Pcan and vkg/Coll IV to the basal surface of follicular epithelial (FE) cells. Likely to function by restricting the activity of the vesicle transport regulator Rab8 to the basal membrane, and thus directs BM protein-containing vesicles to the basal side of the FE cells. This function is independent of the Crag/Rab10 regulation of polarized BM protein secretion in the FE. The sequence is that of Guanine nucleotide exchange factor MSS4 homolog from Drosophila melanogaster (Fruit fly).